The sequence spans 456 residues: MDQEEEEIEIPNYFICPISLEIMKDPVTTVSGITYDRQNIVKWLEKVPSCPVTKQPLPLDSDLTPNHMLRRLIQHWCVENETRGVVRISTPRVPPGKLNVVEEIKNLKKFGQEALGREETLQKLEVLAMDGNNRRLMCECGVHKSLILFVVKCTSEDEDGRRRIKGLDESLRLLHLIGIPSNDAKTILMENDRVMESLTWVLHQEDFLSKAYTIVLLRNLTEYTSSHIVERLNPEIFKGIIGFLKDVVNSVNRTSPTVRETVQSSSRPSLGKTEPSKLDHSLVIKQAVTAALMILLETSSWSRNRSLLVDLGAVSELIELEISYTGEKRITELMLGVLSRLCCCANGRAEILAHRGGIAVVTKRLLRVSPAADDRAISILTTVSKFSPENMVVEEMVNVGTVEKLCSVLGMDCGLNLKEKAKEILKDHFDEWKKFPCIDITLLTKLLSISPKGPKI.

In terms of domain architecture, U-box spans 9–83 (EIPNYFICPI…QHWCVENETR (75 aa)).

Post-translationally, auto-ubiquitinated.

The catalysed reaction is S-ubiquitinyl-[E2 ubiquitin-conjugating enzyme]-L-cysteine + [acceptor protein]-L-lysine = [E2 ubiquitin-conjugating enzyme]-L-cysteine + N(6)-ubiquitinyl-[acceptor protein]-L-lysine.. Its pathway is protein modification; protein ubiquitination. In terms of biological role, E3 ubiquitin-protein ligase that acts as a negative regulator of the immunity triggered by the pathogen-associated molecular patterns (PAMPs), in association with PUB22 and PUB23. The chain is E3 ubiquitin-protein ligase PUB24 (PUB24) from Arabidopsis thaliana (Mouse-ear cress).